A 901-amino-acid polypeptide reads, in one-letter code: MLIKMLTKVFGSRNDRTLRRMRKVVNIINGMEPAMEKLSDDELKAKTAEFRARLEKGEVLENLIPEAFAVVREASKRVFGMRHFDVQLLGGMVLNDRCIAEMRTGEGKTLTATLPAYLNALTGKGVHVVTVNDYLAQRDAENNRPLFEFLGMSVGINMSGLPAPAKREAYAADITYGTNNEYGFDYLRDNMAFSPEERVQRKLHYALVDEVDSILIDEARTPLIISGPAEDSSEMYRKVNKIIPHLIRQEKEDSDTFTGEGHFSVDEKARQVNLTERGLVLIEELLVQEGIMEEGESLYSPTNIMLMHHVTAALRAHALFTRDVDYIVKDGEVIIVDEHTGRTMQGRRWSDGLHQAVEAKEGVEIQNENQTLASITFQNYFRLYEKLAGMTGTADTEAFEFSSIYKLDTVVVPTNRPMIRKDMADLVYMTEAEKIQAIIEDIKTRTAAGQPVLVGTISIEKSEVVSRELTKAGIKHNVLNAKFHASEADIVAQAGYPAAVTIATNMAGRGTDIMLGGSWQAEVAALENPTAEQIEKIKADWQVRHDAVLAAGGLHIIGTERHESRRIDNQLRGRAGRQGDAGSSRFYLSMEDALMRIFASDRVSGMMRKLGMKPGEAIEHPWVTKAIANAQRKVESRNFDIRKQLLEYDDVANDQRRAIYTQRNELLDVSDVSETINSIREDVFKATIDAHIPPQSLEEMWDIEGLQERLKNDFDLELPIKEWLDKEPELHEETLRERILQSAVETYQRKEEVVGAEMMRHFEKGVMLQTLDSLWKEHLAAMDYLRQGIHLRGYAQKDPKQEYKRESFSMFAAMLESLKYEVISTLSKVQVRMPEEVEAMEQQRREEAERLAQMQQLSHQSDDEAAAEDLAAQTGERKVGRNDPCPCGSGKKYKQCHGRLS.

ATP contacts are provided by residues glutamine 87, 105–109 (GEGKT), and aspartate 512. Residues 852 to 901 (AQMQQLSHQSDDEAAAEDLAAQTGERKVGRNDPCPCGSGKKYKQCHGRLS) are disordered. Cysteine 885, cysteine 887, cysteine 896, and histidine 897 together coordinate Zn(2+). Positions 891-901 (KKYKQCHGRLS) are enriched in basic residues.

It belongs to the SecA family. Monomer and homodimer. Part of the essential Sec protein translocation apparatus which comprises SecA, SecYEG and auxiliary proteins SecDF-YajC and YidC. Zn(2+) serves as cofactor.

It localises to the cell inner membrane. It is found in the cytoplasm. It catalyses the reaction ATP + H2O + cellular proteinSide 1 = ADP + phosphate + cellular proteinSide 2.. Its function is as follows. Part of the Sec protein translocase complex. Interacts with the SecYEG preprotein conducting channel. Has a central role in coupling the hydrolysis of ATP to the transfer of proteins into and across the cell membrane, serving both as a receptor for the preprotein-SecB complex and as an ATP-driven molecular motor driving the stepwise translocation of polypeptide chains across the membrane. The sequence is that of Protein translocase subunit SecA from Klebsiella pneumoniae (strain 342).